A 571-amino-acid polypeptide reads, in one-letter code: Septation ring formation regulator EzrA (571 aa).

Over 1–3 the chain is Extracellular; it reads MYY. A helical transmembrane segment spans residues 4 to 22; that stretch reads MLIGFIIVVIAIISAGYIL. Residues 23-571 lie on the Cytoplasmic side of the membrane; sequence KRKHYQRINE…ESKVSVDDIE (549 aa). Coiled-coil stretches lie at residues 169–214, 249–298, 326–374, 400–438, and 474–529; these read VETK…AQME, AQME…DTLE, DALA…ASGE, KFAE…RERL, and TQDW…ENHF.

Belongs to the EzrA family.

The protein localises to the cell membrane. In terms of biological role, negative regulator of FtsZ ring formation; modulates the frequency and position of FtsZ ring formation. Inhibits FtsZ ring formation at polar sites. Interacts either with FtsZ or with one of its binding partners to promote depolymerization. The polypeptide is Septation ring formation regulator EzrA (Listeria welshimeri serovar 6b (strain ATCC 35897 / DSM 20650 / CCUG 15529 / CIP 8149 / NCTC 11857 / SLCC 5334 / V8)).